A 137-amino-acid polypeptide reads, in one-letter code: MRTFWIVAMLLVGVEGSLVELGKMILQETGKNPITSYGIYGCNCGVGSRHKPKDGTDRCCFVHKCCYKKLTDCDPKMDGYTYSFKDKTIICDVNNPCLKEMCECDKAVAICLRENLDTYNKKYKIYPKFLCKKPDTC.

The N-terminal stretch at 1–16 (MRTFWIVAMLLVGVEG) is a signal peptide. Intrachain disulfides connect C42/C131, C44/C60, C59/C111, C65/C137, C66/C104, C73/C97, and C91/C102. Residues 121 to 133 (KKYKIYPKFLCKK) form an important for membrane-damaging activities in eukaryotes and bacteria; heparin-binding region.

As to quaternary structure, homodimer; non-covalently linked. Expressed by the venom gland.

Its subcellular location is the secreted. In terms of biological role, snake venom phospholipase A2 homolog that lacks enzymatic activity. Displays edema-inducing activities and may be myotoxic. A model of myotoxic mechanism has been proposed: an apo Lys49-PLA2 is activated by the entrance of a hydrophobic molecule (e.g. fatty acid) at the hydrophobic channel of the protein leading to a reorientation of a monomer. This reorientation causes a transition between 'inactive' to 'active' states, causing alignment of C-terminal and membrane-docking sites (MDoS) side-by-side and putting the membrane-disruption sites (MDiS) in the same plane, exposed to solvent and in a symmetric position for both monomers. The MDoS region stabilizes the toxin on membrane by the interaction of charged residues with phospholipid head groups. Subsequently, the MDiS region destabilizes the membrane with penetration of hydrophobic residues. This insertion causes a disorganization of the membrane, allowing an uncontrolled influx of ions (i.e. calcium and sodium), and eventually triggering irreversible intracellular alterations and cell death. This Crotalus atrox (Western diamondback rattlesnake) protein is Basic phospholipase A2 homolog Cax-K49.